The following is a 255-amino-acid chain: Geranylgeranylglyceryl phosphate synthase (255 aa).

Asp-34 and Thr-64 together coordinate Mg(2+). Sn-glycerol 1-phosphate is bound by residues 182 to 188 (YLEAGSG), 213 to 214 (GG), and 235 to 236 (GN).

This sequence belongs to the GGGP/HepGP synthase family. Group II subfamily. Requires Mg(2+) as cofactor.

Its subcellular location is the cytoplasm. It carries out the reaction sn-glycerol 1-phosphate + (2E,6E,10E)-geranylgeranyl diphosphate = sn-3-O-(geranylgeranyl)glycerol 1-phosphate + diphosphate. It participates in membrane lipid metabolism; glycerophospholipid metabolism. Prenyltransferase that catalyzes the transfer of the geranylgeranyl moiety of geranylgeranyl diphosphate (GGPP) to the C3 hydroxyl of sn-glycerol-1-phosphate (G1P). This reaction is the first ether-bond-formation step in the biosynthesis of archaeal membrane lipids. This Saccharolobus islandicus (strain M.16.27) (Sulfolobus islandicus) protein is Geranylgeranylglyceryl phosphate synthase.